We begin with the raw amino-acid sequence, 86 residues long: Putative membrane protein insertion efficiency factor (86 aa).

Positions 66-86 are disordered; it reads FSKGGFDPVPPHDGVPGKKED.

The protein belongs to the UPF0161 family.

The protein localises to the cell inner membrane. Its function is as follows. Could be involved in insertion of integral membrane proteins into the membrane. The protein is Putative membrane protein insertion efficiency factor of Chlorobium luteolum (strain DSM 273 / BCRC 81028 / 2530) (Pelodictyon luteolum).